A 342-amino-acid chain; its full sequence is N-alpha-acetyl-L-2,4-diaminobutyric acid deacetylase (342 aa).

The interval 103 to 124 is disordered; sequence TAGRRTSPMDGGNLNRSFPGDP.

This sequence belongs to the DoeB deacetylase family. Zn(2+) serves as cofactor.

It is found in the cytoplasm. The catalysed reaction is (2S)-2-acetamido-4-aminobutanoate + H2O = L-2,4-diaminobutanoate + acetate. Its function is as follows. Involved in the degradation of ectoine, which allows H.elongata to utilize ectoine as both a carbon and a nitrogen source for growth. Catalyzes the deacetylation of N-alpha-acetyl-L-2,4-diaminobutyrate (N-alpha-Ac-DABA) to yield L-2,4-diaminobutyrate (DABA). In Halomonas elongata (strain ATCC 33173 / DSM 2581 / NBRC 15536 / NCIMB 2198 / 1H9), this protein is N-alpha-acetyl-L-2,4-diaminobutyric acid deacetylase.